We begin with the raw amino-acid sequence, 363 residues long: Electron transfer flavoprotein subunit alpha, mitochondrial (363 aa).

A mitochondrion-targeting transit peptide spans 1-24 (MTRTVLLRALTKNKFVASNAPRSI). 303-331 (LYMAFGVSGAIQHLAGIKDSKVIVAVNKD) provides a ligand contact to FAD.

The protein belongs to the ETF alpha-subunit/FixB family. In terms of assembly, heterodimer of an alpha and a beta subunit. The cofactor is FAD.

It localises to the mitochondrion matrix. The electron transfer flavoprotein serves as a specific electron acceptor for several dehydrogenases, including five acyl-CoA dehydrogenases, glutaryl-CoA and sarcosine dehydrogenase. It transfers the electrons to the main mitochondrial respiratory chain via ETF-ubiquinone oxidoreductase (ETF dehydrogenase). Involved in leucine catabolism and in phytol degradation. In Arabidopsis thaliana (Mouse-ear cress), this protein is Electron transfer flavoprotein subunit alpha, mitochondrial (ETFA).